The sequence spans 254 residues: Coenzyme F420:L-glutamate ligase (254 aa).

GTP is bound by residues 11 to 14 (IPLI), 40 to 41 (ST), and K45. D109 is an a divalent metal cation binding site. N112 is a GTP binding site. The a divalent metal cation site is built by D150, T151, and E208. A GTP-binding site is contributed by 206–213 (MGEGAGGI).

It belongs to the CofE family. As to quaternary structure, homodimer. The cofactor is Mg(2+). It depends on Mn(2+) as a cofactor. K(+) is required as a cofactor.

The enzyme catalyses oxidized coenzyme F420-0 + GTP + L-glutamate = oxidized coenzyme F420-1 + GDP + phosphate + H(+). It carries out the reaction oxidized coenzyme F420-1 + GTP + L-glutamate = oxidized coenzyme F420-2 + GDP + phosphate + H(+). Its pathway is cofactor biosynthesis; coenzyme F420 biosynthesis. Catalyzes the GTP-dependent successive addition of two or more gamma-linked L-glutamates to the L-lactyl phosphodiester of 7,8-didemethyl-8-hydroxy-5-deazariboflavin (F420-0) to form coenzyme F420-0-glutamyl-glutamate (F420-2) or polyglutamated F420 derivatives. This chain is Coenzyme F420:L-glutamate ligase, found in Methanosarcina mazei (strain ATCC BAA-159 / DSM 3647 / Goe1 / Go1 / JCM 11833 / OCM 88) (Methanosarcina frisia).